A 423-amino-acid chain; its full sequence is Growth hormone-releasing hormone receptor (423 aa).

The first 22 residues, 1 to 22 (MDGLMWATRILCLLSLCGVTLG), serve as a signal peptide directing secretion. The Extracellular portion of the chain corresponds to 23-130 (HLHLECDFIT…KEKSYFSTVK (108 aa)). Cystine bridges form between cysteine 41–cysteine 64, cysteine 55–cysteine 96, and cysteine 78–cysteine 112. N-linked (GlcNAc...) asparagine glycosylation is found at asparagine 49 and asparagine 50. Residues 131–151 (IIYTTGHSISIVALCVAIAIL) form a helical membrane-spanning segment. Topologically, residues 152 to 167 (VALRRLHCPRNYIHTQ) are cytoplasmic. A helical membrane pass occupies residues 168 to 188 (LFATFILKASAVFLKDAAIFQ). The Extracellular portion of the chain corresponds to 189–210 (GDSTDHCSMSTVLCKVSVAISH). The helical transmembrane segment at 211–231 (LATMTNFSWLLAEAVYLSCLL) threads the bilayer. Over 232-240 (ASTSPRSKP) the chain is Cytoplasmic. The chain crosses the membrane as a helical span at residues 241–261 (AFWWLVLAGWGLPVLCTGTWV). Topologically, residues 262 to 283 (GCKLAFEDTECWDLDNSSPCWW) are extracellular. A helical membrane pass occupies residues 284–304 (IIKGPIVLSVGVNFGLFLNII). The Cytoplasmic portion of the chain corresponds to 305–331 (CILLRKLEPAQGGLHTRAQYWRLSKST). Residues 332 to 352 (LLLIPLFGIHYIIFNFLPDSA) traverse the membrane as a helical segment. The Extracellular portion of the chain corresponds to 353–357 (GLDIR). A helical membrane pass occupies residues 358-378 (VPLELGLGSFQGFIVAVLYCF). Residues 379-423 (LNQEVRTEISRKWYGHDPELLPARRTCTEWTTPPRSRLKVLTSEC) lie on the Cytoplasmic side of the membrane.

Belongs to the G-protein coupled receptor 2 family. In terms of tissue distribution, pituitary gland.

Its subcellular location is the cell membrane. Functionally, receptor for GRF, coupled to G proteins which activate adenylyl cyclase. Stimulates somatotroph cell growth, growth hormone gene transcription and growth hormone secretion. In Mus musculus (Mouse), this protein is Growth hormone-releasing hormone receptor (Ghrhr).